Consider the following 1088-residue polypeptide: Sterol regulatory element-binding protein 2 (1088 aa).

The transcriptional activation (acidic) stretch occupies residues 1–38 (METLTELGDELTLGDIDEMLQFVSNQVGEFPDLFEEQL). Topologically, residues 1-440 (METLTELGDE…TGLGMMDRSR (440 aa)) are cytoplasmic. Residues 59–70 (AAQQPYTTSAPQ) are compositionally biased toward polar residues. A disordered region spans residues 59–87 (AAQQPYTTSAPQPQLLPVKAPPQATPQRT). In terms of domain architecture, bHLH spans 290–340 (ERRTTHNIIEKRYRSSINDKIMELKDLVMGTDAKMHKSGVLKKAIDYIKYL). Positions 340–361 (LQQVNQKLRQENMALKLANQKN) are leucine-zipper. A disordered region spans residues 392-431 (SPPASDSGSPAVFSPYSVDSEPGSPLLDDEKVKDEPDSPT). The chain crosses the membrane as a helical span at residues 441 to 461 (MLLCTMTFLCLSFNPLTSLLH). The Lumenal segment spans residues 462–494 (PESGQYSERAVQHGTGRTMLGVEMSGFYGSWFD). Residues 495–515 (WLIPTIILWLVNGVIVLSVFM) traverse the membrane as a helical segment. Topologically, residues 516–1088 (KLLIHGEPVT…LSGGTAMAAS (573 aa)) are cytoplasmic.

Belongs to the SREBP family. Forms a tight complex with scap, the SCAP-SREBP complex, in the endoplasmic reticulum membrane. In terms of assembly, homodimer; efficient DNA binding of the soluble transcription factor fragment requires dimerization with another bHLH protein. Post-translationally, processed in the Golgi apparatus, releasing the protein from the membrane. At low cholesterol the SCAP-SREBP complex is recruited into COPII vesicles for export from the endoplasmic reticulum. In the Golgi, complex SREBPs are cleaved sequentially by site-1 (MBTPS1, S1P) and site-2 (MBTPS2, S2P) proteases. The first cleavage by site-1 protease occurs within the luminal loop, the second cleavage by site-2 protease occurs within the first transmembrane domain, releasing the transcription factor from the Golgi membrane.

Its subcellular location is the endoplasmic reticulum membrane. It localises to the golgi apparatus membrane. The protein resides in the cytoplasmic vesicle. The protein localises to the COPII-coated vesicle membrane. It is found in the nucleus. In terms of biological role, precursor of the transcription factor form (Processed sterol regulatory element-binding protein 2), which is embedded in the endoplasmic reticulum membrane. Low sterol concentrations promote processing of this form, releasing the transcription factor form that translocates into the nucleus and activates transcription of genes involved in cholesterol biosynthesis. Its function is as follows. Key transcription factor that regulates expression of genes involved in cholesterol biosynthesis. Binds to the sterol regulatory element 1 (SRE-1) (5'-ATCACCCCAC-3'). Has dual sequence specificity binding to both an E-box motif (5'-ATCACGTGA-3') and to SRE-1 (5'-ATCACCCCAC-3'). Regulates transcription of genes related to cholesterol synthesis pathway. This chain is Sterol regulatory element-binding protein 2, found in Xenopus laevis (African clawed frog).